A 263-amino-acid chain; its full sequence is 3-deoxy-manno-octulosonate cytidylyltransferase (263 aa).

Belongs to the KdsB family.

The protein localises to the cytoplasm. It catalyses the reaction 3-deoxy-alpha-D-manno-oct-2-ulosonate + CTP = CMP-3-deoxy-beta-D-manno-octulosonate + diphosphate. It participates in nucleotide-sugar biosynthesis; CMP-3-deoxy-D-manno-octulosonate biosynthesis; CMP-3-deoxy-D-manno-octulosonate from 3-deoxy-D-manno-octulosonate and CTP: step 1/1. Its pathway is bacterial outer membrane biogenesis; lipopolysaccharide biosynthesis. Activates KDO (a required 8-carbon sugar) for incorporation into bacterial lipopolysaccharide in Gram-negative bacteria. The polypeptide is 3-deoxy-manno-octulosonate cytidylyltransferase (Burkholderia multivorans (strain ATCC 17616 / 249)).